Consider the following 378-residue polypeptide: Ribosomal RNA large subunit methyltransferase G (378 aa).

It belongs to the methyltransferase superfamily. RlmG family.

The protein localises to the cytoplasm. It carries out the reaction guanosine(1835) in 23S rRNA + S-adenosyl-L-methionine = N(2)-methylguanosine(1835) in 23S rRNA + S-adenosyl-L-homocysteine + H(+). Functionally, specifically methylates the guanine in position 1835 (m2G1835) of 23S rRNA. The chain is Ribosomal RNA large subunit methyltransferase G from Shigella flexneri.